Here is a 111-residue protein sequence, read N- to C-terminus: Toxin 3FTx-Tri3 (111 aa).

A signal peptide spans 1–19 (MKTLLLALVVVAFMCLGSA). Residues 20–34 (DEVGLGNEQIDRGRR) constitute a propeptide that is removed on maturation. A Pyrrolidone carboxylic acid modification is found at Q35. 4 disulfide bridges follow: C44/C68, C47/C87, C91/C102, and C103/C108.

This sequence belongs to the three-finger toxin family. Ancestral subfamily. Boigatoxin sub-subfamily. In terms of tissue distribution, expressed by the venom gland.

The protein localises to the secreted. Functionally, potent postsynaptic neurotoxin. Displays readily reversible competitive antagonism at the nicotinic acetylcholine receptor (nAChR). This is Toxin 3FTx-Tri3 from Trimorphodon biscutatus (Western lyre snake).